Consider the following 187-residue polypeptide: Cerebral dopamine neurotrophic factor (187 aa).

The signal sequence occupies residues 1–24; it reads MRCTSPAALVTFCAGLWISNHVLA. Cystine bridges form between Cys37/Cys124, Cys40/Cys113, and Cys71/Cys82.

This sequence belongs to the ARMET family.

The protein localises to the secreted. Its function is as follows. Trophic factor for dopamine neurons. Prevents the 6-hydroxydopamine (6-OHDA)-induced degeneration of dopaminergic neurons. When administered after 6-OHDA-lesioning, restores the dopaminergic function and prevents the degeneration of dopaminergic neurons in substantia nigra. This is Cerebral dopamine neurotrophic factor (Cdnf) from Rattus norvegicus (Rat).